Here is a 111-residue protein sequence, read N- to C-terminus: Large ribosomal subunit protein uL22 (111 aa).

The protein belongs to the universal ribosomal protein uL22 family. Part of the 50S ribosomal subunit.

Functionally, this protein binds specifically to 23S rRNA; its binding is stimulated by other ribosomal proteins, e.g. L4, L17, and L20. It is important during the early stages of 50S assembly. It makes multiple contacts with different domains of the 23S rRNA in the assembled 50S subunit and ribosome. In terms of biological role, the globular domain of the protein is located near the polypeptide exit tunnel on the outside of the subunit, while an extended beta-hairpin is found that lines the wall of the exit tunnel in the center of the 70S ribosome. The chain is Large ribosomal subunit protein uL22 from Legionella pneumophila (strain Lens).